Consider the following 452-residue polypeptide: Lichenan permease IIC component (452 aa).

The 414-residue stretch at 8–421 folds into the PTS EIIC type-3 domain; sequence LEEKVMPIAG…AVSFVVYYPF (414 aa). Transmembrane regions (helical) follow at residues 31 to 51, 72 to 92, 104 to 124, 138 to 158, 187 to 207, 218 to 238, 246 to 266, 291 to 311, 351 to 373, and 402 to 422; these read GIIL…IGNL, LAYP…FGIA, LSAG…QVPF, GIPL…IAMV, FVAL…RLIV, IVSV…GGSL, LLWA…APIW, FFDI…VVTM, LLLP…MSTG, and SGAV…YPFF.

The protein localises to the cell membrane. In terms of biological role, the phosphoenolpyruvate-dependent sugar phosphotransferase system (PTS), a major carbohydrate active -transport system, catalyzes the phosphorylation of incoming sugar substrates concomitant with their translocation across the cell membrane. This system is involved in lichenan transport. In Bacillus subtilis (strain 168), this protein is Lichenan permease IIC component (licC).